The chain runs to 418 residues: Tyrosine--tRNA ligase (418 aa).

Position 38 (Tyr-38) interacts with L-tyrosine. Positions Cys-43–Ser-52 match the 'HIGH' region motif. The L-tyrosine site is built by Tyr-175 and Gln-179. The 'KMSKS' region motif lies at Lys-235 to Thr-239. Residue Lys-238 coordinates ATP. The 66-residue stretch at Leu-348–Met-413 folds into the S4 RNA-binding domain.

The protein belongs to the class-I aminoacyl-tRNA synthetase family. TyrS type 1 subfamily. Homodimer.

It localises to the cytoplasm. It catalyses the reaction tRNA(Tyr) + L-tyrosine + ATP = L-tyrosyl-tRNA(Tyr) + AMP + diphosphate + H(+). Catalyzes the attachment of tyrosine to tRNA(Tyr) in a two-step reaction: tyrosine is first activated by ATP to form Tyr-AMP and then transferred to the acceptor end of tRNA(Tyr). The protein is Tyrosine--tRNA ligase of Ehrlichia chaffeensis (strain ATCC CRL-10679 / Arkansas).